A 250-amino-acid chain; its full sequence is Ribosomal RNA small subunit methyltransferase J (250 aa).

S-adenosyl-L-methionine contacts are provided by residues 101-102, 117-118, 153-154, and aspartate 171; these read RD, ER, and SS.

This sequence belongs to the methyltransferase superfamily. RsmJ family.

It localises to the cytoplasm. The catalysed reaction is guanosine(1516) in 16S rRNA + S-adenosyl-L-methionine = N(2)-methylguanosine(1516) in 16S rRNA + S-adenosyl-L-homocysteine + H(+). Specifically methylates the guanosine in position 1516 of 16S rRNA. The polypeptide is Ribosomal RNA small subunit methyltransferase J (Cronobacter sakazakii (strain ATCC BAA-894) (Enterobacter sakazakii)).